We begin with the raw amino-acid sequence, 87 residues long: Small ribosomal subunit protein bS20 (87 aa).

Residues 1–25 are disordered; it reads MANIKSAKKRAVQSEKHRLHNASRR.

Belongs to the bacterial ribosomal protein bS20 family.

Binds directly to 16S ribosomal RNA. The sequence is that of Small ribosomal subunit protein bS20 from Baumannia cicadellinicola subsp. Homalodisca coagulata.